Consider the following 552-residue polypeptide: Pyrophosphate--fructose 6-phosphate 1-phosphotransferase subunit beta (552 aa).

Gly-90 provides a ligand contact to diphosphate. Position 184 (Asp-184) interacts with Mg(2+). Substrate contacts are provided by residues Thr-212–Asp-214, Lys-251–Tyr-252, Met-259–Arg-261, Glu-320, and Tyr-425–Arg-428. Residue Asp-214 is the Proton acceptor of the active site.

Belongs to the phosphofructokinase type A (PFKA) family. PPi-dependent PFK group II subfamily. Clade 'Long' sub-subfamily. As to quaternary structure, tetramer of two alpha (regulatory) and two beta (catalytic) chains. It depends on Mg(2+) as a cofactor.

The protein localises to the cytoplasm. The catalysed reaction is beta-D-fructose 6-phosphate + diphosphate = beta-D-fructose 1,6-bisphosphate + phosphate + H(+). It participates in carbohydrate degradation; glycolysis; D-glyceraldehyde 3-phosphate and glycerone phosphate from D-glucose: step 3/4. With respect to regulation, allosterically activated by fructose 2,6-bisphosphate. In terms of biological role, catalytic subunit of pyrophosphate--fructose 6-phosphate 1-phosphotransferase. Catalyzes the phosphorylation of D-fructose 6-phosphate, the first committing step of glycolysis. Uses inorganic phosphate (PPi) as phosphoryl donor instead of ATP like common ATP-dependent phosphofructokinases (ATP-PFKs), which renders the reaction reversible, and can thus function both in glycolysis and gluconeogenesis. The chain is Pyrophosphate--fructose 6-phosphate 1-phosphotransferase subunit beta from Ricinus communis (Castor bean).